The primary structure comprises 260 residues: (R)-2-hydroxyglutaryl-CoA dehydratase activating ATPase (260 aa).

An ATP-binding site is contributed by 12–16 (STASK). [4Fe-4S] cluster is bound by residues Cys-127 and Cys-166. ATP contacts are provided by Gln-220 and Gln-243.

It belongs to the HgdC family. As to quaternary structure, homodimer. [4Fe-4S] cluster serves as cofactor. Mg(2+) is required as a cofactor.

The catalysed reaction is ATP + H2O = ADP + phosphate + H(+). It functions in the pathway amino-acid degradation; L-glutamate degradation via hydroxyglutarate pathway; crotonoyl-CoA from L-glutamate: step 4/5. Its activity is regulated as follows. Inactivated by exposure to air within less than 15 minutes. Involved in the fermentation of L-glutamate via the hydroxyglutarate pathway. HgdC (CompA) has a very low ATPase activity, whose the role is to activate dehydratase HgdA-HgdB complex and then maintain an appropriate redox state via an ATP-dependent electron transfer. The dehydratase requires only catalytic amounts of ATP and substoichiometric amounts of HgdC (CompA) to be functional. This chain is (R)-2-hydroxyglutaryl-CoA dehydratase activating ATPase, found in Acidaminococcus fermentans (strain ATCC 25085 / DSM 20731 / CCUG 9996 / CIP 106432 / VR4).